The following is a 478-amino-acid chain: Aspartyl/glutamyl-tRNA(Asn/Gln) amidotransferase subunit B (478 aa).

This sequence belongs to the GatB/GatE family. GatB subfamily. As to quaternary structure, heterotrimer of A, B and C subunits.

It carries out the reaction L-glutamyl-tRNA(Gln) + L-glutamine + ATP + H2O = L-glutaminyl-tRNA(Gln) + L-glutamate + ADP + phosphate + H(+). It catalyses the reaction L-aspartyl-tRNA(Asn) + L-glutamine + ATP + H2O = L-asparaginyl-tRNA(Asn) + L-glutamate + ADP + phosphate + 2 H(+). Functionally, allows the formation of correctly charged Asn-tRNA(Asn) or Gln-tRNA(Gln) through the transamidation of misacylated Asp-tRNA(Asn) or Glu-tRNA(Gln) in organisms which lack either or both of asparaginyl-tRNA or glutaminyl-tRNA synthetases. The reaction takes place in the presence of glutamine and ATP through an activated phospho-Asp-tRNA(Asn) or phospho-Glu-tRNA(Gln). The chain is Aspartyl/glutamyl-tRNA(Asn/Gln) amidotransferase subunit B from Pseudothermotoga lettingae (strain ATCC BAA-301 / DSM 14385 / NBRC 107922 / TMO) (Thermotoga lettingae).